A 257-amino-acid chain; its full sequence is MQELIRVVILAIVQGIAEFLPISSSGHLVILGSMLGELGESVTLEIILHAGTLGSILVVFWQRIWALLLKDRRVIGLLVIGTLPAVVIGLTIKTQFPEILRSPLLAGAMLIVTGVMLIVLGRLTPKSGTYDRLGLGAAFLVGCFQAFAILPGISRSGSTILGGRLMGLDRDDSVTFSFLLAIPAILGATVLAIKDLLEDGSSGETSIEVLSIGAAVAFAVGIVALKWLIRWSREDRLHWFAYWCIPAGLLVVLLNLR.

Transmembrane regions (helical) follow at residues 4–24, 41–61, 74–94, 103–123, 133–153, 173–193, 209–229, and 236–256; these read LIRV…PISS, SVTL…VVFW, VIGL…TIKT, PLLA…LGRL, LGLG…LPGI, SVTF…VLAI, VLSI…KWLI, and RLHW…LLNL.

It belongs to the UppP family.

The protein resides in the cell inner membrane. It catalyses the reaction di-trans,octa-cis-undecaprenyl diphosphate + H2O = di-trans,octa-cis-undecaprenyl phosphate + phosphate + H(+). Catalyzes the dephosphorylation of undecaprenyl diphosphate (UPP). Confers resistance to bacitracin. The sequence is that of Undecaprenyl-diphosphatase from Rhodopirellula baltica (strain DSM 10527 / NCIMB 13988 / SH1).